The primary structure comprises 179 residues: Cytochrome b6-f complex iron-sulfur subunit (179 aa).

A helical transmembrane segment spans residues 21–43; the sequence is LLTFGTVTGVALGALYPVVNYFI. The Rieske domain occupies 61–162; sequence GNDIIVSEFL…ANVSDDKLVF (102 aa). [2Fe-2S] cluster-binding residues include cysteine 108, histidine 110, cysteine 126, and histidine 129. Cysteine 113 and cysteine 128 form a disulfide bridge.

The protein belongs to the Rieske iron-sulfur protein family. As to quaternary structure, the 4 large subunits of the cytochrome b6-f complex are cytochrome b6, subunit IV (17 kDa polypeptide, PetD), cytochrome f and the Rieske protein, while the 4 small subunits are PetG, PetL, PetM and PetN. The complex functions as a dimer. Requires [2Fe-2S] cluster as cofactor.

The protein resides in the cellular thylakoid membrane. The catalysed reaction is 2 oxidized [plastocyanin] + a plastoquinol + 2 H(+)(in) = 2 reduced [plastocyanin] + a plastoquinone + 4 H(+)(out). Its function is as follows. Component of the cytochrome b6-f complex, which mediates electron transfer between photosystem II (PSII) and photosystem I (PSI), cyclic electron flow around PSI, and state transitions. This is Cytochrome b6-f complex iron-sulfur subunit from Trichodesmium erythraeum (strain IMS101).